Reading from the N-terminus, the 220-residue chain is MEDEKNENLMTFIQFCATFITITLFIMPLKTIRLIIEKKNVGTVAGLQFISSVLNCFLWISYALLTSNTTMLFVNSIGMMFSIYYVFNYWKNINQVRASRDYLKKVMIACVLAITIISISYYNTVDDLDTRISRLGFLSSVVCVLMFASPLEKMAIVIQSKNSEGMIINVAILSLLCGLSWTIFGLLLNDIYIYLPNILASILSFVQLTLIKLYPPQILL.

A run of 7 helical transmembrane segments spans residues 9-29, 44-64, 70-90, 106-126, 138-158, 167-187, and 191-211; these read LMTF…IMPL, VAGL…SYAL, TMLF…FNYW, VMIA…NTVD, LSSV…AIVI, IINV…FGLL, and IYIY…LTLI. In terms of domain architecture, MtN3/slv 1 spans 12–92; that stretch reads FIQFCATFIT…IYYVFNYWKN (81 aa). In terms of domain architecture, MtN3/slv 2 spans 134–217; it reads RLGFLSSVVC…LTLIKLYPPQ (84 aa).

It belongs to the SWEET sugar transporter family.

The protein resides in the golgi apparatus membrane. The protein localises to the cell membrane. In terms of biological role, mediates both low-affinity uptake and efflux of sugar across the membrane. This chain is Sugar transporter SWEET1 (slc50a1), found in Dictyostelium discoideum (Social amoeba).